Reading from the N-terminus, the 434-residue chain is Adenylosuccinate synthetase (434 aa).

GTP is bound by residues 15–21 (GDEGKGK) and 43–45 (GHT). D16 (proton acceptor) is an active-site residue. Mg(2+) contacts are provided by D16 and G43. IMP-binding positions include 16–19 (DEGK), 41–44 (NAGH), T133, R147, Q228, T243, and R307. Catalysis depends on H44, which acts as the Proton donor. A substrate-binding site is contributed by 303 to 309 (SVTGRAR). GTP-binding positions include R309, 335-337 (KLD), and 418-420 (STG).

It belongs to the adenylosuccinate synthetase family. As to quaternary structure, homodimer. Mg(2+) is required as a cofactor.

The protein resides in the cytoplasm. It catalyses the reaction IMP + L-aspartate + GTP = N(6)-(1,2-dicarboxyethyl)-AMP + GDP + phosphate + 2 H(+). Its pathway is purine metabolism; AMP biosynthesis via de novo pathway; AMP from IMP: step 1/2. Plays an important role in the de novo pathway of purine nucleotide biosynthesis. Catalyzes the first committed step in the biosynthesis of AMP from IMP. The protein is Adenylosuccinate synthetase of Neisseria gonorrhoeae (strain NCCP11945).